The sequence spans 315 residues: Homoserine kinase (315 aa).

Residue 97–107 participates in ATP binding; that stretch reads PPARGLGSSAT.

Belongs to the GHMP kinase family. Homoserine kinase subfamily.

It localises to the cytoplasm. It catalyses the reaction L-homoserine + ATP = O-phospho-L-homoserine + ADP + H(+). Its pathway is amino-acid biosynthesis; L-threonine biosynthesis; L-threonine from L-aspartate: step 4/5. Its function is as follows. Catalyzes the ATP-dependent phosphorylation of L-homoserine to L-homoserine phosphate. In Prochlorococcus marinus (strain MIT 9301), this protein is Homoserine kinase.